Consider the following 107-residue polypeptide: Holo-[acyl-carrier-protein] synthase (107 aa).

Asp-10 and Glu-54 together coordinate Mg(2+).

Belongs to the P-Pant transferase superfamily. AcpS family. Mg(2+) is required as a cofactor.

It localises to the cytoplasm. The catalysed reaction is apo-[ACP] + CoA = holo-[ACP] + adenosine 3',5'-bisphosphate + H(+). Its function is as follows. Transfers the 4'-phosphopantetheine moiety from coenzyme A to a Ser of acyl-carrier-protein. This is Holo-[acyl-carrier-protein] synthase from Mycoplasma mobile (strain ATCC 43663 / 163K / NCTC 11711) (Mesomycoplasma mobile).